We begin with the raw amino-acid sequence, 163 residues long: Shikimate kinase (163 aa).

An ATP-binding site is contributed by 10-15 (GVGKTT). Threonine 14 lines the Mg(2+) pocket. Substrate contacts are provided by aspartate 28, arginine 52, and glycine 75. Residue arginine 116 participates in ATP binding. Arginine 134 serves as a coordination point for substrate. Residue arginine 151 coordinates ATP.

Belongs to the shikimate kinase family. In terms of assembly, monomer. Requires Mg(2+) as cofactor.

It is found in the cytoplasm. The enzyme catalyses shikimate + ATP = 3-phosphoshikimate + ADP + H(+). It participates in metabolic intermediate biosynthesis; chorismate biosynthesis; chorismate from D-erythrose 4-phosphate and phosphoenolpyruvate: step 5/7. Its function is as follows. Catalyzes the specific phosphorylation of the 3-hydroxyl group of shikimic acid using ATP as a cosubstrate. This Streptococcus pyogenes serotype M12 (strain MGAS2096) protein is Shikimate kinase.